The primary structure comprises 636 residues: Cysteine-rich receptor-like protein kinase 24 (636 aa).

The N-terminal stretch at 1 to 20 is a signal peptide; sequence MVKFLVIFWFVVISFSHVSA. Gnk2-homologous domains follow at residues 21-124 and 130-235; these read QVCL…NRSF and MEIL…LYPF. The Extracellular segment spans residues 21 to 254; sequence QVCLERSGFF…RQKDGKSIST (234 aa). N-linked (GlcNAc...) asparagine glycans are attached at residues asparagine 33, asparagine 50, asparagine 98, asparagine 101, asparagine 121, asparagine 137, asparagine 145, and asparagine 197. The chain crosses the membrane as a helical span at residues 255 to 275; it reads GAIVAIIVVPILLLALGVGLW. Residues 276–636 lie on the Cytoplasmic side of the membrane; it reads KRRKAYKTKT…SVSVTCVSPR (361 aa). The Protein kinase domain maps to 312-585; the sequence is FHNVNKLGHG…TMSTVFHMLT (274 aa). Residues 318-326 and lysine 340 contribute to the ATP site; that span reads LGHGGFGEV. Aspartate 437 serves as the catalytic Proton acceptor.

It belongs to the protein kinase superfamily. Ser/Thr protein kinase family. CRK subfamily.

The protein localises to the membrane. The enzyme catalyses L-seryl-[protein] + ATP = O-phospho-L-seryl-[protein] + ADP + H(+). It catalyses the reaction L-threonyl-[protein] + ATP = O-phospho-L-threonyl-[protein] + ADP + H(+). The sequence is that of Cysteine-rich receptor-like protein kinase 24 (CRK24) from Arabidopsis thaliana (Mouse-ear cress).